We begin with the raw amino-acid sequence, 368 residues long: 3-dehydroquinate synthase (368 aa).

Residues 109–113 (GVIGD), 133–134 (TS), Lys-146, Lys-155, and 173–176 (TLQT) each bind NAD(+). Zn(2+) is bound by residues Glu-188, His-253, and His-270.

This sequence belongs to the sugar phosphate cyclases superfamily. Dehydroquinate synthase family. It depends on Co(2+) as a cofactor. Requires Zn(2+) as cofactor. NAD(+) serves as cofactor.

It localises to the cytoplasm. It carries out the reaction 7-phospho-2-dehydro-3-deoxy-D-arabino-heptonate = 3-dehydroquinate + phosphate. Its pathway is metabolic intermediate biosynthesis; chorismate biosynthesis; chorismate from D-erythrose 4-phosphate and phosphoenolpyruvate: step 2/7. Functionally, catalyzes the conversion of 3-deoxy-D-arabino-heptulosonate 7-phosphate (DAHP) to dehydroquinate (DHQ). The sequence is that of 3-dehydroquinate synthase from Synechococcus sp. (strain ATCC 27144 / PCC 6301 / SAUG 1402/1) (Anacystis nidulans).